The sequence spans 229 residues: Flagellar L-ring protein 1 (229 aa).

Residues 1–18 (MYLRKISAPLMTMLLLNG) form the signal peptide. C19 is lipidated: N-palmitoyl cysteine. C19 carries S-diacylglycerol cysteine lipidation.

This sequence belongs to the FlgH family. As to quaternary structure, the basal body constitutes a major portion of the flagellar organelle and consists of four rings (L,P,S, and M) mounted on a central rod.

The protein localises to the cell outer membrane. Its subcellular location is the bacterial flagellum basal body. Assembles around the rod to form the L-ring and probably protects the motor/basal body from shearing forces during rotation. The polypeptide is Flagellar L-ring protein 1 (flgH1) (Yersinia pseudotuberculosis serotype I (strain IP32953)).